The following is a 230-amino-acid chain: Ion-translocating oxidoreductase complex subunit E (230 aa).

6 consecutive transmembrane segments (helical) span residues 18–38 (ALVQ…ATNA), 39–59 (LGLG…VSAL), 63–83 (TPAE…VSAV), 86–106 (LINA…PLIV), 125–145 (WLSA…MFVL), and 182–202 (PFLL…MLAV).

It belongs to the NqrDE/RnfAE family. As to quaternary structure, the complex is composed of six subunits: RsxA, RsxB, RsxC, RsxD, RsxE and RsxG.

It localises to the cell inner membrane. In terms of biological role, part of a membrane-bound complex that couples electron transfer with translocation of ions across the membrane. Required to maintain the reduced state of SoxR. This is Ion-translocating oxidoreductase complex subunit E from Salmonella newport (strain SL254).